Here is a 195-residue protein sequence, read N- to C-terminus: Protein GrpE (195 aa).

The protein belongs to the GrpE family. As to quaternary structure, homodimer.

The protein localises to the cytoplasm. Participates actively in the response to hyperosmotic and heat shock by preventing the aggregation of stress-denatured proteins, in association with DnaK and GrpE. It is the nucleotide exchange factor for DnaK and may function as a thermosensor. Unfolded proteins bind initially to DnaJ; upon interaction with the DnaJ-bound protein, DnaK hydrolyzes its bound ATP, resulting in the formation of a stable complex. GrpE releases ADP from DnaK; ATP binding to DnaK triggers the release of the substrate protein, thus completing the reaction cycle. Several rounds of ATP-dependent interactions between DnaJ, DnaK and GrpE are required for fully efficient folding. The sequence is that of Protein GrpE from Francisella tularensis subsp. tularensis (strain FSC 198).